A 556-amino-acid polypeptide reads, in one-letter code: Non-structural maintenance of chromosome element 5 (556 aa).

As to quaternary structure, component of the Smc5-Smc6 complex which consists of KRE29, MMS21, NSE1, NSE3, NSE4, NSE5, SMC5 and SMC6. Interacts with KRE29.

The protein localises to the nucleus. The protein resides in the chromosome. Its function is as follows. Acts in a DNA repair pathway for removal of UV-induced DNA damage that is distinct from classical nucleotide excision repair and in repair of ionizing radiation damage. Functions in homologous recombination repair of DNA double strand breaks and in recovery of stalled replication forks. The polypeptide is Non-structural maintenance of chromosome element 5 (NSE5) (Saccharomyces cerevisiae (strain ATCC 204508 / S288c) (Baker's yeast)).